The following is a 417-amino-acid chain: Senescence-associated protein AAF, chloroplastic (417 aa).

Residues 1 to 36 (MALNVSKVVPNSPILVKSVNASRSRRVLLAYVHHPL) constitute a chloroplast transit peptide.

This sequence belongs to the ATA15/OSA15 family. As to expression, expressed in leaves. Expressed in 7-day-old seedlings, roots, rosette leaves, cauline leaves and flower buds.

The protein resides in the plastid. It localises to the chloroplast. Its function is as follows. Involved in modulation of redox homeostasis to regulate leaf senescence mediated by age and stress factors during plant development. Its function is dependent of EIN2, a central factor of ethylene signaling. The polypeptide is Senescence-associated protein AAF, chloroplastic (Arabidopsis thaliana (Mouse-ear cress)).